The chain runs to 944 residues: Protein translocase subunit SecA (944 aa).

Residues Gln-87, 105–109 (GEGKT), and Asp-494 each bind ATP. The interval 894 to 944 (HAAAAGDGEEKPRPKQETVVRTQPKVGRNDPCPCGSGKKYKKCHGATEAAV) is disordered. The segment covering 901 to 911 (GEEKPRPKQET) has biased composition (basic and acidic residues). Residues Cys-925, Cys-927, Cys-936, and His-937 each contribute to the Zn(2+) site.

It belongs to the SecA family. As to quaternary structure, monomer and homodimer. Part of the essential Sec protein translocation apparatus which comprises SecA, SecYEG and auxiliary proteins SecDF-YajC and YidC. The cofactor is Zn(2+).

It is found in the cell inner membrane. Its subcellular location is the cytoplasm. The enzyme catalyses ATP + H2O + cellular proteinSide 1 = ADP + phosphate + cellular proteinSide 2.. Functionally, part of the Sec protein translocase complex. Interacts with the SecYEG preprotein conducting channel. Has a central role in coupling the hydrolysis of ATP to the transfer of proteins into and across the cell membrane, serving as an ATP-driven molecular motor driving the stepwise translocation of polypeptide chains across the membrane. The protein is Protein translocase subunit SecA of Anaeromyxobacter sp. (strain Fw109-5).